Here is a 307-residue protein sequence, read N- to C-terminus: MRVRVAARGSRLSLLQVEQALEELSRYAGVSMHWEVVRVKSAGDVWSDRPLESIGVVGVFTREVDRAVASGAADIAVHSLKDMPTSGYGGPLKIVYIASRPSARDALISRQGPGRVEDLEPGSTLGTSSARRRALSLHYNPRIRVENLRGNLDTRLRKLREGLYDAIIASEAGLIRLGVDVEYTPLDPSYFPPAPGQGFVAVVARVGSNVEKMLRDLDKPPWWHVAWAERGVLEGARAGCRTPVAAYAEPLGRSMVRVTAAALSPDGSRAYWARAEGRIEEARRIGVSLGEELSRVVEGWHKTGGGS.

Cysteine 240 bears the S-(dipyrrolylmethanemethyl)cysteine mark.

This sequence belongs to the HMBS family. Requires dipyrromethane as cofactor.

The enzyme catalyses 4 porphobilinogen + H2O = hydroxymethylbilane + 4 NH4(+). The protein operates within porphyrin-containing compound metabolism; protoporphyrin-IX biosynthesis; coproporphyrinogen-III from 5-aminolevulinate: step 2/4. Functionally, tetrapolymerization of the monopyrrole PBG into the hydroxymethylbilane pre-uroporphyrinogen in several discrete steps. This is Probable porphobilinogen deaminase (hemC) from Aeropyrum pernix (strain ATCC 700893 / DSM 11879 / JCM 9820 / NBRC 100138 / K1).